Here is a 253-residue protein sequence, read N- to C-terminus: Hydroxyacylglutathione hydrolase (253 aa).

Residues His-54, His-56, Asp-58, His-59, His-112, Asp-131, and His-169 each contribute to the Zn(2+) site.

Belongs to the metallo-beta-lactamase superfamily. Glyoxalase II family. In terms of assembly, monomer. Requires Zn(2+) as cofactor.

It carries out the reaction an S-(2-hydroxyacyl)glutathione + H2O = a 2-hydroxy carboxylate + glutathione + H(+). It functions in the pathway secondary metabolite metabolism; methylglyoxal degradation; (R)-lactate from methylglyoxal: step 2/2. Its function is as follows. Thiolesterase that catalyzes the hydrolysis of S-D-lactoyl-glutathione to form glutathione and D-lactic acid. The polypeptide is Hydroxyacylglutathione hydrolase (Bartonella quintana (strain Toulouse) (Rochalimaea quintana)).